The following is a 419-amino-acid chain: Glutamate dehydrogenase (419 aa).

Lys105 is an active-site residue. 219 to 225 (GYGNAGY) is a binding site for NAD(+).

It belongs to the Glu/Leu/Phe/Val dehydrogenases family. As to quaternary structure, homohexamer.

It catalyses the reaction L-glutamate + NAD(+) + H2O = 2-oxoglutarate + NH4(+) + NADH + H(+). The catalysed reaction is L-glutamate + NADP(+) + H2O = 2-oxoglutarate + NH4(+) + NADPH + H(+). This chain is Glutamate dehydrogenase (gdhA), found in Thermococcus profundus.